Here is a 2399-residue protein sequence, read N- to C-terminus: Protein DOP1A (2399 aa).

Disordered regions lie at residues 556–598 (PSGQ…SSES), 619–660 (NGQG…GAAG), 1105–1124 (SDSGCSQSSAGDNFSYEVDP), 1166–1188 (SVTSELEIESLQTKSSDLDPGKE), 1234–1263 (SPCISGTAQTLNDSSVPSETKSRQRSHSSI), and 1279–1308 (ETIVKESGKQPGAKPKVKLARKKDEDKKKA). 2 stretches are compositionally biased toward low complexity: residues 629-647 (GSTSSETETASTVGSEETV) and 1105-1116 (SDSGCSQSSAGD). Polar residues-rich tracts occupy residues 1166 to 1180 (SVTSELEIESLQTKS) and 1234 to 1252 (SPCISGTAQTLNDSSVPSE). Ser1261 carries the post-translational modification Phosphoserine.

This sequence belongs to the DOP1 family.

Its subcellular location is the golgi apparatus membrane. In terms of biological role, may be involved in protein traffic between late Golgi and early endosomes. The sequence is that of Protein DOP1A (Dop1a) from Mus musculus (Mouse).